A 360-amino-acid polypeptide reads, in one-letter code: sn-glycerol-3-phosphate import ATP-binding protein UgpC (360 aa).

The ABC transporter domain maps to 4–235; it reads LSLKGVRKSY…PATTFVASFI (232 aa). Residue 37 to 44 coordinates ATP; sequence GPSGCGKS.

This sequence belongs to the ABC transporter superfamily. sn-glycerol-3-phosphate importer (TC 3.A.1.1.3) family. As to quaternary structure, the complex is composed of two ATP-binding proteins (UgpC), two transmembrane proteins (UgpA and UgpE) and a solute-binding protein (UgpB).

The protein localises to the cell inner membrane. The enzyme catalyses sn-glycerol 3-phosphate(out) + ATP + H2O = sn-glycerol 3-phosphate(in) + ADP + phosphate + H(+). In terms of biological role, part of the ABC transporter complex UgpBAEC involved in sn-glycerol-3-phosphate (G3P) import. Responsible for energy coupling to the transport system. This is sn-glycerol-3-phosphate import ATP-binding protein UgpC from Burkholderia pseudomallei (strain 1710b).